Consider the following 91-residue polypeptide: Probable Thioredoxin (91 aa).

Residues 1–91 enclose the Glutaredoxin domain; sequence MVMMKLFTSP…LKGGEEYGAS (91 aa). Cysteines 12 and 15 form a disulfide.

Belongs to the glutaredoxin family.

It localises to the cytoplasm. Functionally, acts to maintain redox homeostasis; functions as a protein disulfide reductase. The sequence is that of Probable Thioredoxin from Archaeoglobus fulgidus (strain ATCC 49558 / DSM 4304 / JCM 9628 / NBRC 100126 / VC-16).